The chain runs to 162 residues: uncharacterized protein (162 aa).

The first 34 residues, 1 to 34 (MAREVISTSILMIATVVAVTAAIMVILPAVKDLA), serve as a signal peptide directing secretion.

This is an uncharacterized protein from Archaeoglobus fulgidus (strain ATCC 49558 / DSM 4304 / JCM 9628 / NBRC 100126 / VC-16).